The sequence spans 160 residues: Cytochrome b6-f complex subunit 4 (160 aa).

3 helical membrane passes run 36–56 (LLYI…GLAV), 95–115 (LLGV…PFLE), and 131–151 (TIFL…ALPI).

This sequence belongs to the cytochrome b family. PetD subfamily. In terms of assembly, the 4 large subunits of the cytochrome b6-f complex are cytochrome b6, subunit IV (17 kDa polypeptide, petD), cytochrome f and the Rieske protein, while the 4 small subunits are petG, petL, petM and petN. The complex functions as a dimer.

It localises to the plastid. It is found in the chloroplast thylakoid membrane. Functionally, component of the cytochrome b6-f complex, which mediates electron transfer between photosystem II (PSII) and photosystem I (PSI), cyclic electron flow around PSI, and state transitions. The chain is Cytochrome b6-f complex subunit 4 from Anthoceros angustus (Hornwort).